A 129-amino-acid polypeptide reads, in one-letter code: Small ribosomal subunit protein uS11 (129 aa).

Belongs to the universal ribosomal protein uS11 family. In terms of assembly, part of the 30S ribosomal subunit. Interacts with proteins S7 and S18. Binds to IF-3.

Its function is as follows. Located on the platform of the 30S subunit, it bridges several disparate RNA helices of the 16S rRNA. Forms part of the Shine-Dalgarno cleft in the 70S ribosome. This is Small ribosomal subunit protein uS11 from Ectopseudomonas mendocina (strain ymp) (Pseudomonas mendocina).